A 456-amino-acid polypeptide reads, in one-letter code: MYKCALILAAGKGKRMKSDLPKVLHKVCDKEMVNHVIDTMRKSELQDVNVVIGKGAELVREATSKKNISYSLQSEQLGTGHAVKCAEDFLRGKDGVVAIFTGDAPLITEDTVKNLIDFHEKGGYKATIITALIDNPEGYGRIIRNVDGSVKKIVEHKDCTEDELKVKEINSAMYCFDIKSLLESLDKLNNNNVQGEYYLTDVIGILEEEGAKIGAISVPFEEILGVNSRLQLCQVGKVMQKRINEKHMENGSTLIDPDNTYIGADVEIESDTIIYPGNVLQGKTVIKTGCVLYPNSRIEDSVIGKNVTVQSSVILESKVGEDTTVGPFAYIRPESNIGNKVRIGDFVEIKKSTIGNNTKVSHLTYIGDAEVGEGCNFGCGTVVVNYDGKDKHKTVIGNKSFIGCNTNLVSPVTVEDNTYIAAGSTITNKVPEGSLAIARAKQVVKEGWVDKKGLLK.

The tract at residues 1-229 (MYKCALILAA…FEEILGVNSR (229 aa)) is pyrophosphorylase. UDP-N-acetyl-alpha-D-glucosamine contacts are provided by residues 8–11 (LAAG), lysine 22, glutamine 73, and 78–79 (GT). Aspartate 103 is a Mg(2+) binding site. UDP-N-acetyl-alpha-D-glucosamine-binding residues include glycine 140, glutamate 155, asparagine 170, and asparagine 227. Mg(2+) is bound at residue asparagine 227. Residues 230-250 (LQLCQVGKVMQKRINEKHMEN) form a linker region. An N-acetyltransferase region spans residues 251 to 456 (GSTLIDPDNT…GWVDKKGLLK (206 aa)). Residues arginine 332 and lysine 350 each contribute to the UDP-N-acetyl-alpha-D-glucosamine site. Histidine 362 functions as the Proton acceptor in the catalytic mechanism. 2 residues coordinate UDP-N-acetyl-alpha-D-glucosamine: tyrosine 365 and asparagine 376. Acetyl-CoA is bound by residues 385–386 (NY), alanine 422, and arginine 439.

In the N-terminal section; belongs to the N-acetylglucosamine-1-phosphate uridyltransferase family. This sequence in the C-terminal section; belongs to the transferase hexapeptide repeat family. In terms of assembly, homotrimer. The cofactor is Mg(2+).

The protein resides in the cytoplasm. The catalysed reaction is alpha-D-glucosamine 1-phosphate + acetyl-CoA = N-acetyl-alpha-D-glucosamine 1-phosphate + CoA + H(+). It catalyses the reaction N-acetyl-alpha-D-glucosamine 1-phosphate + UTP + H(+) = UDP-N-acetyl-alpha-D-glucosamine + diphosphate. The protein operates within nucleotide-sugar biosynthesis; UDP-N-acetyl-alpha-D-glucosamine biosynthesis; N-acetyl-alpha-D-glucosamine 1-phosphate from alpha-D-glucosamine 6-phosphate (route II): step 2/2. It functions in the pathway nucleotide-sugar biosynthesis; UDP-N-acetyl-alpha-D-glucosamine biosynthesis; UDP-N-acetyl-alpha-D-glucosamine from N-acetyl-alpha-D-glucosamine 1-phosphate: step 1/1. Its pathway is bacterial outer membrane biogenesis; LPS lipid A biosynthesis. Catalyzes the last two sequential reactions in the de novo biosynthetic pathway for UDP-N-acetylglucosamine (UDP-GlcNAc). The C-terminal domain catalyzes the transfer of acetyl group from acetyl coenzyme A to glucosamine-1-phosphate (GlcN-1-P) to produce N-acetylglucosamine-1-phosphate (GlcNAc-1-P), which is converted into UDP-GlcNAc by the transfer of uridine 5-monophosphate (from uridine 5-triphosphate), a reaction catalyzed by the N-terminal domain. In Clostridium acetobutylicum (strain ATCC 824 / DSM 792 / JCM 1419 / IAM 19013 / LMG 5710 / NBRC 13948 / NRRL B-527 / VKM B-1787 / 2291 / W), this protein is Bifunctional protein GlmU.